The following is a 269-amino-acid chain: Protein SET (269 aa).

The segment at 1-33 (MSSVPKRAKLDGAPADGNTSAAAGNNEEESEAL) is disordered. A phosphoserine mark is found at Ser-30, Ser-148, and Ser-152. Residues 227–269 (LVPDIEVEPEDEEDNEDNDEEAFDDEDGEDGEGEEEEEDEDDK) are disordered. Positions 231 to 269 (IEVEPEDEEDNEDNDEEAFDDEDGEDGEGEEEEEDEDDK) are enriched in acidic residues.

The protein belongs to the nucleosome assembly protein (NAP) family. In terms of assembly, interacts specifically with B-type cyclins.

This Drosophila melanogaster (Fruit fly) protein is Protein SET (Set).